The chain runs to 95 residues: Protein Vpr (95 aa).

The interval methionine 1–leucine 42 is homooligomerization. Residues serine 79, serine 93, and serine 95 each carry the phosphoserine; by host modification.

It belongs to the HIV-1 VPR protein family. Homooligomer, may form homodimer. Interacts with p6-gag region of the Pr55 Gag precursor protein through a (Leu-X-X)4 motif near the C-terminus of the P6gag protein. Interacts with host UNG. May interact with host RAD23A/HHR23A. Interacts with host VPRBP/DCAF1, leading to hijack the CUL4A-RBX1-DDB1-DCAF1/VPRBP complex, mediating ubiquitination of host proteins such as TERT and ZGPAT and arrest of the cell cycle in G2 phase. In terms of processing, phosphorylated on several residues by host. These phosphorylations regulate VPR activity for the nuclear import of the HIV-1 pre-integration complex.

Its subcellular location is the virion. The protein resides in the host nucleus. The protein localises to the host extracellular space. Functionally, during virus replication, may deplete host UNG protein, and incude G2-M cell cycle arrest. Acts by targeting specific host proteins for degradation by the 26S proteasome, through association with the cellular CUL4A-DDB1 E3 ligase complex by direct interaction with host VPRPB/DCAF-1. Cell cycle arrest reportedly occurs within hours of infection and is not blocked by antiviral agents, suggesting that it is initiated by the VPR carried into the virion. Additionally, VPR induces apoptosis in a cell cycle dependent manner suggesting that these two effects are mechanistically linked. Detected in the serum and cerebrospinal fluid of AIDS patient, VPR may also induce cell death to bystander cells. In terms of biological role, during virus entry, plays a role in the transport of the viral pre-integration (PIC) complex to the host nucleus. This function is crucial for viral infection of non-dividing macrophages. May act directly at the nuclear pore complex, by binding nucleoporins phenylalanine-glycine (FG)-repeat regions. The polypeptide is Protein Vpr (Homo sapiens (Human)).